The chain runs to 560 residues: Putative transport protein VFMJ11_0927 (560 aa).

A run of 5 helical transmembrane segments spans residues 8–28, 37–57, 66–86, 94–114, and 161–181; these read LLSQ…LFIA, LGSS…GYTF, FMLF…GIFL, LLVL…GHYF, and NLSV…ILLA. RCK C-terminal domains lie at 203-292 and 293-376; these read RGIG…FRNG and KEVF…KIGF. The next 5 helical transmembrane spans lie at 386–406, 409–429, 451–471, 478–498, and 539–559; these read LLAF…TMSF, VTFG…LGFL, GLLV…NEYF, VLAA…LVGA, and AGTY…MILL.

The protein belongs to the AAE transporter (TC 2.A.81) family. YbjL subfamily.

The protein resides in the cell membrane. The polypeptide is Putative transport protein VFMJ11_0927 (Aliivibrio fischeri (strain MJ11) (Vibrio fischeri)).